Consider the following 335-residue polypeptide: Acetyl-coenzyme A carboxylase carboxyl transferase subunit alpha (335 aa).

Residues 40–294 (QLETLAARRR…KEAIEKHLNA (255 aa)) form the CoA carboxyltransferase C-terminal domain.

This sequence belongs to the AccA family. As to quaternary structure, acetyl-CoA carboxylase is a heterohexamer composed of biotin carboxyl carrier protein (AccB), biotin carboxylase (AccC) and two subunits each of ACCase subunit alpha (AccA) and ACCase subunit beta (AccD).

It is found in the cytoplasm. The catalysed reaction is N(6)-carboxybiotinyl-L-lysyl-[protein] + acetyl-CoA = N(6)-biotinyl-L-lysyl-[protein] + malonyl-CoA. It functions in the pathway lipid metabolism; malonyl-CoA biosynthesis; malonyl-CoA from acetyl-CoA: step 1/1. Functionally, component of the acetyl coenzyme A carboxylase (ACC) complex. First, biotin carboxylase catalyzes the carboxylation of biotin on its carrier protein (BCCP) and then the CO(2) group is transferred by the carboxyltransferase to acetyl-CoA to form malonyl-CoA. This Prochlorococcus marinus (strain AS9601) protein is Acetyl-coenzyme A carboxylase carboxyl transferase subunit alpha.